The chain runs to 178 residues: MRCLLLTLGLALLCGVQAVEVTPIMTELDTQKVAGTWHTVAMAVSDVSLLDAKSSPLKAYVEGLKPTPEGDLEILLQKRENDKCAQEVLLAKKTDIPAVFKINALDENQLFLLDTDYDSHLLLCMENSASPEHSLVCQSLARTLEVDDQIREKFEDALKTLSVPMRILPAQLEEQCRV.

The N-terminal stretch at 1–18 is a signal peptide; it reads MRCLLLTLGLALLCGVQA. 2 disulfide bridges follow: C84-C176 and C124-C137.

This sequence belongs to the calycin superfamily. Lipocalin family. Under physiological conditions beta-lactoglobulin exists as an equilibrium mixture of monomeric and dimeric forms.

The protein localises to the secreted. Functionally, lactoglobulin is the primary component of whey, it binds retinol and is probably involved in the transport of that molecule. The polypeptide is Beta-lactoglobulin-1A/1C (Sus scrofa (Pig)).